Reading from the N-terminus, the 222-residue chain is Phosphoenolpyruvate guanylyltransferase (222 aa).

Positions 147, 163, and 166 each coordinate phosphoenolpyruvate.

It belongs to the CofC family.

The enzyme catalyses phosphoenolpyruvate + GTP + H(+) = enolpyruvoyl-2-diphospho-5'-guanosine + diphosphate. It participates in cofactor biosynthesis; coenzyme F420 biosynthesis. Guanylyltransferase that catalyzes the activation of phosphoenolpyruvate (PEP) as enolpyruvoyl-2-diphospho-5'-guanosine, via the condensation of PEP with GTP. It is involved in the biosynthesis of coenzyme F420, a hydride carrier cofactor. The chain is Phosphoenolpyruvate guanylyltransferase from Streptosporangium roseum (strain ATCC 12428 / DSM 43021 / JCM 3005 / KCTC 9067 / NCIMB 10171 / NRRL 2505 / NI 9100).